The chain runs to 512 residues: 2,3-bisphosphoglycerate-independent phosphoglycerate mutase (512 aa).

Positions 11 and 61 each coordinate Mn(2+). The active-site Phosphoserine intermediate is the Ser-61. Residues His-122, 152 to 153 (RD), Arg-184, Arg-190, 259 to 262 (RADR), and Lys-332 each bind substrate. Mn(2+)-binding residues include Asp-399, His-403, Asp-440, His-441, and His-459.

The protein belongs to the BPG-independent phosphoglycerate mutase family. Monomer. Mn(2+) is required as a cofactor.

The enzyme catalyses (2R)-2-phosphoglycerate = (2R)-3-phosphoglycerate. The protein operates within carbohydrate degradation; glycolysis; pyruvate from D-glyceraldehyde 3-phosphate: step 3/5. In terms of biological role, catalyzes the interconversion of 2-phosphoglycerate and 3-phosphoglycerate. The chain is 2,3-bisphosphoglycerate-independent phosphoglycerate mutase from Francisella philomiragia subsp. philomiragia (strain ATCC 25017 / CCUG 19701 / FSC 153 / O#319-036).